A 190-amino-acid chain; its full sequence is Isopentenyl-diphosphate Delta-isomerase (190 aa).

Mn(2+) contacts are provided by His-27 and His-34. The region spanning 32 to 166 is the Nudix hydrolase domain; the sequence is ALHLAFSCHV…PWAFSPWLTL (135 aa). The active site involves Cys-69. Residue His-71 participates in Mn(2+) binding. A Mg(2+)-binding site is contributed by Glu-89. Residues Glu-116 and Glu-118 each coordinate Mn(2+). Residue Glu-118 is part of the active site.

Belongs to the IPP isomerase type 1 family. The cofactor is Mg(2+). Mn(2+) is required as a cofactor.

The protein localises to the cytoplasm. The catalysed reaction is isopentenyl diphosphate = dimethylallyl diphosphate. It participates in isoprenoid biosynthesis; dimethylallyl diphosphate biosynthesis; dimethylallyl diphosphate from isopentenyl diphosphate: step 1/1. Catalyzes the 1,3-allylic rearrangement of the homoallylic substrate isopentenyl (IPP) to its highly electrophilic allylic isomer, dimethylallyl diphosphate (DMAPP). This Clavibacter sepedonicus (Clavibacter michiganensis subsp. sepedonicus) protein is Isopentenyl-diphosphate Delta-isomerase.